Here is a 421-residue protein sequence, read N- to C-terminus: MNLAHTTVLLWAWGSLQAFEIVEKENIFQRTPCPAFLMFDNAAYLTDMSFELPCPCKPEEVSAVVWYYQKHLGSSHTKVLTDFDGRVLTEAAQVRVGSDMLVRFSIRMFSLLVFRAQPEDSGLYFCGTRKGDYFYAYDVDIQSSEGMVATFKDQGQEPLEDEYHGSLRVFTTFWEWTPCDRCGVRGEQWRIGLCYLQSPDLSPRYRKILPNVVSCGSRAVPRQLRAKASDHNPELLVRSCLMPCEKKKKVQEGVMAIFNYVSKVGSRPWLPQVPIQFHQQRLGHGLIISCPGARPEHAVAWDKDHQYLYRTQYLKGVNGSMRVFIDHGNHLHIRFTQLEDRGIYYCWRQGERIAGFRLGVTSPGRYPVSFSDPETRAALGLILIGYMLITVIFISIHLCRCCCYLFRFCPNFSPRLSRPQL.

The signal sequence occupies residues 1-18; that stretch reads MNLAHTTVLLWAWGSLQA. Topologically, residues 19–377 are extracellular; sequence FEIVEKENIF…VSFSDPETRA (359 aa). Positions 268–362 constitute an Ig-like V-type domain; that stretch reads PWLPQVPIQF…IAGFRLGVTS (95 aa). Cys290 and Cys346 are joined by a disulfide. The N-linked (GlcNAc...) asparagine glycan is linked to Asn318. Residues 378–398 form a helical membrane-spanning segment; it reads ALGLILIGYMLITVIFISIHL. The Cytoplasmic portion of the chain corresponds to 399-421; sequence CRCCCYLFRFCPNFSPRLSRPQL.

Belongs to the FAM187 family.

The protein resides in the membrane. The chain is Ig-like V-type domain-containing protein FAM187A (FAM187A) from Bos taurus (Bovine).